A 471-amino-acid chain; its full sequence is Phosphatidate cytidylyltransferase 3 (471 aa).

Residues 1–72 (MAMEKDLSPN…HRRRSSENLA (72 aa)) form a disordered region. Residues 21–35 (SYPTTPTSRMNTNNQ) show a composition bias toward polar residues. The next 8 helical transmembrane spans lie at 97–116 (WIRT…IIYM), 120–139 (YIWA…LFFL), 149–169 (LPGF…FVYG), 196–216 (YQMV…ILTL), 228–250 (YAWT…ANIF), 255–277 (WFLL…GFYF), 293–313 (GFIG…NVLG), and 368–388 (FSLG…ASGF).

Belongs to the CDS family. The cofactor is Mg(2+).

Its subcellular location is the membrane. The enzyme catalyses a 1,2-diacyl-sn-glycero-3-phosphate + CTP + H(+) = a CDP-1,2-diacyl-sn-glycerol + diphosphate. The protein operates within phospholipid metabolism; CDP-diacylglycerol biosynthesis; CDP-diacylglycerol from sn-glycerol 3-phosphate: step 3/3. Functionally, may be involved in the synthesis of minor phospholipids and in modulation of IP3-mediated signal transduction. The protein is Phosphatidate cytidylyltransferase 3 of Arabidopsis thaliana (Mouse-ear cress).